The primary structure comprises 1297 residues: Phosphoribosylformylglycinamidine synthase (1297 aa).

The tract at residues 303 to 329 is disordered; that stretch reads ISPFPGAATGSGGEIRDEGATGRGAKP. ATP is bound at residue 308–319; the sequence is GAATGSGGEIRD. Residues aspartate 680, glutamate 719, asparagine 723, and aspartate 887 each contribute to the Mg(2+) site. ATP is bound at residue serine 889. The 253-residue stretch at 1045-1297 folds into the Glutamine amidotransferase type-1 domain; the sequence is IAILREQGVN…RLFRNARMVF (253 aa). Cysteine 1138 serves as the catalytic Nucleophile. Active-site residues include histidine 1263 and glutamate 1265.

In the N-terminal section; belongs to the FGAMS family. As to quaternary structure, monomer.

The protein localises to the cytoplasm. The enzyme catalyses N(2)-formyl-N(1)-(5-phospho-beta-D-ribosyl)glycinamide + L-glutamine + ATP + H2O = 2-formamido-N(1)-(5-O-phospho-beta-D-ribosyl)acetamidine + L-glutamate + ADP + phosphate + H(+). It functions in the pathway purine metabolism; IMP biosynthesis via de novo pathway; 5-amino-1-(5-phospho-D-ribosyl)imidazole from N(2)-formyl-N(1)-(5-phospho-D-ribosyl)glycinamide: step 1/2. Functionally, phosphoribosylformylglycinamidine synthase involved in the purines biosynthetic pathway. Catalyzes the ATP-dependent conversion of formylglycinamide ribonucleotide (FGAR) and glutamine to yield formylglycinamidine ribonucleotide (FGAM) and glutamate. The chain is Phosphoribosylformylglycinamidine synthase from Haemophilus influenzae (strain 86-028NP).